A 699-amino-acid chain; its full sequence is Bifunctional protein GAL10 (699 aa).

The segment at 1-357 (MTAQLQSEST…TTENPFGYQL (357 aa)) is galactowaldenase. Residue 13–44 (IVLVTGGAGYIGSHTVVELIENGYDCVVADNL) participates in NAD(+) binding. The segment at 358–699 (RGVEARFSAE…YGSKIVYRFS (342 aa)) is mutarotase. The active-site For mutarotase activity is the H537. A Phosphoserine modification is found at S562.

It in the N-terminal section; belongs to the NAD(P)-dependent epimerase/dehydratase family. This sequence in the C-terminal section; belongs to the aldose epimerase family. The cofactor is NAD(+).

The catalysed reaction is UDP-alpha-D-glucose = UDP-alpha-D-galactose. The enzyme catalyses alpha-D-glucose = beta-D-glucose. Its pathway is carbohydrate metabolism; galactose metabolism. The protein operates within carbohydrate metabolism; hexose metabolism. In terms of biological role, mutarotase converts alpha-aldose to the beta-anomer. It is active on D-glucose, L-arabinose, D-xylose, D-galactose, maltose and lactose. This chain is Bifunctional protein GAL10 (GAL10), found in Saccharomyces cerevisiae (strain ATCC 204508 / S288c) (Baker's yeast).